A 176-amino-acid chain; its full sequence is Peptidyl-prolyl cis-trans isomerase CYP19-3 (176 aa).

Residues 7-170 (FFDILIGKMK…ERVVIEDCGE (164 aa)) enclose the PPIase cyclophilin-type domain.

The protein belongs to the cyclophilin-type PPIase family. As to expression, ubiquitous, with highest levels in flowers and lowest levels in roots.

It localises to the cytoplasm. The enzyme catalyses [protein]-peptidylproline (omega=180) = [protein]-peptidylproline (omega=0). Its activity is regulated as follows. Binds cyclosporin A (CsA). CsA mediates some of its effects via an inhibitory action on PPIase. Functionally, PPIases accelerate the folding of proteins. It catalyzes the cis-trans isomerization of proline imidic peptide bonds in oligopeptides. This is Peptidyl-prolyl cis-trans isomerase CYP19-3 (CYP19-3) from Arabidopsis thaliana (Mouse-ear cress).